Consider the following 128-residue polypeptide: Saitohin (128 aa).

Residues 77-128 (SYSSEESSRNGAEQGRQLSIEGPFQGQNCPSHPAAALPLPMRGESQATSCQV) are disordered.

As to quaternary structure, interacts with PRDX6.

The protein resides in the cytoplasm. The protein localises to the nucleus. This chain is Saitohin (STH), found in Gorilla gorilla gorilla (Western lowland gorilla).